The following is a 324-amino-acid chain: Myoblast determination protein 1 homolog (324 aa).

The tract at residues 125-146 is disordered; that stretch reads VDSQHEDTTTSTAGGAGVGGPR. One can recognise a bHLH domain in the interval 155–206; it reads DRRKAATMRERRRLRKVNEAFEVVKQRTCPNPNQRLPKVEILRSAIDYINNL. A disordered region spans residues 251–272; sequence YNPENMFDDDDLTDSDDDRDHH. A compositionally biased stretch (acidic residues) spans 256–267; sequence MFDDDDLTDSDD.

In terms of assembly, efficient DNA binding requires dimerization with another bHLH protein. As to expression, body wall muscle cells; in clonal muscle precursors, in a set of early embryonic blastomeres (the ms-granddaughters), and in six glial-like cells called GLRS.

It localises to the nucleus. Involved in myogenesis, in cooperation with transcription factors unc-120 and hnd-1. Acts redundantly with fozi-1 to promote body wall muscle cell and coelomocyte specification in postembryonic mesoderm progenitors, probably through suppression of sem-2. The chain is Myoblast determination protein 1 homolog from Caenorhabditis elegans.